The chain runs to 1114 residues: Filamentous growth regulator 23 (1114 aa).

Residues 1-21 form the signal peptide; the sequence is MFASYLLLVLWIIRLVPTTHA. 2 disordered regions span residues 232-256 and 284-314; these read GSET…PSTT and SSSI…TSSS. Residues 240 to 252 show a composition bias toward pro residues; the sequence is TTAPKPVETPSPE. N-linked (GlcNAc...) asparagine glycosylation is found at Asn-382, Asn-397, Asn-475, Asn-490, Asn-506, Asn-539, Asn-565, Asn-591, Asn-637, Asn-687, and Asn-739. Residues 392–430 form a disordered region; sequence SETTTNESSSYTDEPSSSEEITNTYEPSSSTESSTTDQF. The tract at residues 764-784 is disordered; sequence TSTLTSSHTSDNEKPASLSSS. N-linked (GlcNAc...) asparagine glycosylation is present at Asn-831. 2 stretches are compositionally biased toward low complexity: residues 844–910 and 922–941; these read SASS…SSSS and SSSV…ESSS. The tract at residues 844–963 is disordered; it reads SASSSYHSSE…ANENTSEITT (120 aa). Polar residues predominate over residues 942 to 963; the sequence is NGLVSTVTESSTANENTSEITT. Asn-957, Asn-966, and Asn-1070 each carry an N-linked (GlcNAc...) asparagine glycan. Asn-1089 carries GPI-anchor amidated asparagine lipidation. A propeptide spans 1090–1114 (removed in mature form); the sequence is ANSLGLKNGDNSWIIGIMMIGLLMI.

It localises to the cell membrane. Putative adhesin which may be involved in cell adhesion and virulence. Involved in the regulation of filamentous growth. This chain is Filamentous growth regulator 23 (FGR23), found in Candida albicans (strain SC5314 / ATCC MYA-2876) (Yeast).